The primary structure comprises 282 residues: Phosphatidylserine decarboxylase proenzyme (282 aa).

Residues aspartate 85, histidine 142, and serine 244 each act as charge relay system; for autoendoproteolytic cleavage activity in the active site. Catalysis depends on serine 244, which acts as the Schiff-base intermediate with substrate; via pyruvic acid; for decarboxylase activity. Residue serine 244 is modified to Pyruvic acid (Ser); by autocatalysis.

The protein belongs to the phosphatidylserine decarboxylase family. PSD-B subfamily. Prokaryotic type I sub-subfamily. Heterodimer of a large membrane-associated beta subunit and a small pyruvoyl-containing alpha subunit. Pyruvate is required as a cofactor. In terms of processing, is synthesized initially as an inactive proenzyme. Formation of the active enzyme involves a self-maturation process in which the active site pyruvoyl group is generated from an internal serine residue via an autocatalytic post-translational modification. Two non-identical subunits are generated from the proenzyme in this reaction, and the pyruvate is formed at the N-terminus of the alpha chain, which is derived from the carboxyl end of the proenzyme. The autoendoproteolytic cleavage occurs by a canonical serine protease mechanism, in which the side chain hydroxyl group of the serine supplies its oxygen atom to form the C-terminus of the beta chain, while the remainder of the serine residue undergoes an oxidative deamination to produce ammonia and the pyruvoyl prosthetic group on the alpha chain. During this reaction, the Ser that is part of the protease active site of the proenzyme becomes the pyruvoyl prosthetic group, which constitutes an essential element of the active site of the mature decarboxylase.

It localises to the cell membrane. The enzyme catalyses a 1,2-diacyl-sn-glycero-3-phospho-L-serine + H(+) = a 1,2-diacyl-sn-glycero-3-phosphoethanolamine + CO2. Its pathway is phospholipid metabolism; phosphatidylethanolamine biosynthesis; phosphatidylethanolamine from CDP-diacylglycerol: step 2/2. Its function is as follows. Catalyzes the formation of phosphatidylethanolamine (PtdEtn) from phosphatidylserine (PtdSer). This Coxiella burnetii (strain CbuG_Q212) (Coxiella burnetii (strain Q212)) protein is Phosphatidylserine decarboxylase proenzyme.